Here is a 355-residue protein sequence, read N- to C-terminus: Acidic fibroblast growth factor intracellular-binding protein B (355 aa).

Interacts with IER2.

It localises to the nucleus. It is found in the endomembrane system. Functionally, mediates with IER2 FGF-signaling in Kupffer's vesicle ciliogenesis and in the establishment of laterality in the embryo. May be involved in mitogenic function of FGF1. This chain is Acidic fibroblast growth factor intracellular-binding protein B, found in Danio rerio (Zebrafish).